The primary structure comprises 528 residues: Ceramide glucosyltransferase (528 aa).

Over 1–6 the chain is Lumenal; that stretch reads MYSFIE. Residues 7–27 form a helical membrane-spanning segment; the sequence is CIAGALFVLGCVVVTLVVIGV. At 28–369 the chain is on the cytoplasmic side; sequence RALLYNFRNR…TVLSATILEP (342 aa). A short sequence motif (D1) is located at residue Asp-94. A short sequence motif (D2) is located at residue Asp-154. Asp-308 is a short sequence motif (D3). The Proton acceptor role is filled by Asp-308. Residues 349–353 carry the (Q/R)XXRW motif; it reads RRSRW. A helical transmembrane segment spans residues 370–390; the sequence is FTECFLFATYMSLAMTTIPVL. Residues 391-402 are Lumenal-facing; that stretch reads SQNLGIPKTWNA. The helical transmembrane segment at 403–423 threads the bilayer; that stretch reads TAIAWFTITTLWMLIDYIGYL. At 424-457 the chain is on the cytoplasmic side; the sequence is RLHSGVTMEVDEHTPYFAKGFKNTGGIKRRPFLE. A helical transmembrane segment spans residues 458–478; the sequence is FLAAWIGREGLAFPVWAYAVV. Residues 479-528 are Lumenal-facing; sequence FGNTVNWRGRLFYIHWDTTVDAVEPREERTREVRTPELERGPSRNKHRVD. The disordered stretch occupies residues 503–528; sequence PREERTREVRTPELERGPSRNKHRVD.

This sequence belongs to the glycosyltransferase 2 family.

The protein resides in the golgi apparatus membrane. The catalysed reaction is an N-acylsphing-4-enine + UDP-alpha-D-glucose = a beta-D-glucosyl-(1&lt;-&gt;1')-N-acylsphing-4-enine + UDP + H(+). The protein operates within lipid metabolism; sphingolipid metabolism. Its function is as follows. Catalyzes the final step in the biosynthesis of the membrane lipid glucosylceramide (GluCer), the transfer of glucose to ceramide. Glucosylceramides play important roles in growth, differentiation and pathogenicity. Contribution to fungal pathogenesis is host-dependent. This Gibberella zeae (strain ATCC MYA-4620 / CBS 123657 / FGSC 9075 / NRRL 31084 / PH-1) (Wheat head blight fungus) protein is Ceramide glucosyltransferase.